Consider the following 86-residue polypeptide: U15-lycotoxin-Ls1d (86 aa).

Residues 1 to 20 form the signal peptide; that stretch reads MNSKIFAVLLLLGLLSCVLS. A WAP domain is found at 21–66; sequence DQYCPKSSITACKKMNIRNDCCKDDDCTGGSWCCATPCGNFCKYPT. Disulfide bonds link Cys24–Cys54, Cys32–Cys58, Cys41–Cys53, Cys42–Cys80, and Cys47–Cys62.

The protein belongs to the venom protein 11 family. 01 (wap-1) subfamily. In terms of processing, contains 5 disulfide bonds. In terms of tissue distribution, expressed by the venom gland.

The protein resides in the secreted. Functionally, has antibacterial activity. The polypeptide is U15-lycotoxin-Ls1d (Lycosa singoriensis (Wolf spider)).